The following is a 102-amino-acid chain: Colipase-like protein 2 (102 aa).

The signal sequence occupies residues 1-23 (MAFTQALVTVLALLAGTLPHRHS). Cystine bridges form between Cys36–Cys47, Cys42–Cys58, Cys46–Cys80, Cys68–Cys88, and Cys82–Cys99.

The protein belongs to the colipase family.

It is found in the secreted. The polypeptide is Colipase-like protein 2 (Clpsl2) (Mus musculus (Mouse)).